Consider the following 237-residue polypeptide: 7-cyano-7-deazaguanine synthase (237 aa).

Residue 14-24 participates in ATP binding; sequence FSGGQDSATCL. Zn(2+)-binding residues include Cys202, Cys217, Cys220, and Cys223.

The protein belongs to the QueC family. Zn(2+) is required as a cofactor.

The catalysed reaction is 7-carboxy-7-deazaguanine + NH4(+) + ATP = 7-cyano-7-deazaguanine + ADP + phosphate + H2O + H(+). It functions in the pathway purine metabolism; 7-cyano-7-deazaguanine biosynthesis. In terms of biological role, catalyzes the ATP-dependent conversion of 7-carboxy-7-deazaguanine (CDG) to 7-cyano-7-deazaguanine (preQ(0)). The chain is 7-cyano-7-deazaguanine synthase from Rhodopseudomonas palustris (strain ATCC BAA-98 / CGA009).